The sequence spans 916 residues: Translation initiation factor IF-2 (916 aa).

The interval 1 to 325 is disordered; the sequence is MTDSNDDKTL…QEKFRRSQVQ (325 aa). The segment covering 60–91 has biased composition (low complexity); sequence ITPATPAAPVRAAEPAPAPAQARPQQSTPAPR. The span at 97–108 shows a compositional bias: polar residues; the sequence is GQANQRPQQSYQ. Residues 125-182 show a composition bias toward basic and acidic residues; it reads SPEEMDARRRALAESQARDAQDAIRRAEEEKRRAAEEAVRKAAEAEEAARRAVEEAAR. Composition is skewed to low complexity over residues 183-209 and 229-243; these read QAEA…AEAR and DGAA…PAAV. Residues 414 to 581 form the tr-type G domain; that stretch reads SRPPVVTIMG…AVLLQAEILD (168 aa). Positions 423–430 are G1; that stretch reads GHVDHGKT. 423 to 430 is a binding site for GTP; the sequence is GHVDHGKT. The tract at residues 448 to 452 is G2; the sequence is GITQH. A G3 region spans residues 469–472; that stretch reads DTPG. GTP contacts are provided by residues 469 to 473 and 523 to 526; these read DTPGH and NKID. Residues 523–526 form a G4 region; sequence NKID. Positions 559 to 561 are G5; the sequence is SAK.

This sequence belongs to the TRAFAC class translation factor GTPase superfamily. Classic translation factor GTPase family. IF-2 subfamily.

The protein resides in the cytoplasm. Its function is as follows. One of the essential components for the initiation of protein synthesis. Protects formylmethionyl-tRNA from spontaneous hydrolysis and promotes its binding to the 30S ribosomal subunits. Also involved in the hydrolysis of GTP during the formation of the 70S ribosomal complex. The sequence is that of Translation initiation factor IF-2 from Rhizobium etli (strain ATCC 51251 / DSM 11541 / JCM 21823 / NBRC 15573 / CFN 42).